A 316-amino-acid chain; its full sequence is 4-hydroxy-3-methylbut-2-enyl diphosphate reductase (316 aa).

Residue cysteine 12 participates in [4Fe-4S] cluster binding. Positions 41 and 74 each coordinate (2E)-4-hydroxy-3-methylbut-2-enyl diphosphate. Residues histidine 41 and histidine 74 each coordinate dimethylallyl diphosphate. Positions 41 and 74 each coordinate isopentenyl diphosphate. Cysteine 96 is a binding site for [4Fe-4S] cluster. (2E)-4-hydroxy-3-methylbut-2-enyl diphosphate is bound at residue histidine 124. Residue histidine 124 coordinates dimethylallyl diphosphate. Histidine 124 contacts isopentenyl diphosphate. The Proton donor role is filled by glutamate 126. Threonine 167 provides a ligand contact to (2E)-4-hydroxy-3-methylbut-2-enyl diphosphate. Residue cysteine 197 participates in [4Fe-4S] cluster binding. 4 residues coordinate (2E)-4-hydroxy-3-methylbut-2-enyl diphosphate: serine 225, serine 226, asparagine 227, and serine 269. Serine 225, serine 226, asparagine 227, and serine 269 together coordinate dimethylallyl diphosphate. The isopentenyl diphosphate site is built by serine 225, serine 226, asparagine 227, and serine 269.

Belongs to the IspH family. As to quaternary structure, homodimer. The cofactor is [4Fe-4S] cluster.

It catalyses the reaction isopentenyl diphosphate + 2 oxidized [2Fe-2S]-[ferredoxin] + H2O = (2E)-4-hydroxy-3-methylbut-2-enyl diphosphate + 2 reduced [2Fe-2S]-[ferredoxin] + 2 H(+). The catalysed reaction is dimethylallyl diphosphate + 2 oxidized [2Fe-2S]-[ferredoxin] + H2O = (2E)-4-hydroxy-3-methylbut-2-enyl diphosphate + 2 reduced [2Fe-2S]-[ferredoxin] + 2 H(+). It functions in the pathway isoprenoid biosynthesis; dimethylallyl diphosphate biosynthesis; dimethylallyl diphosphate from (2E)-4-hydroxy-3-methylbutenyl diphosphate: step 1/1. The protein operates within isoprenoid biosynthesis; isopentenyl diphosphate biosynthesis via DXP pathway; isopentenyl diphosphate from 1-deoxy-D-xylulose 5-phosphate: step 6/6. In terms of biological role, catalyzes the conversion of 1-hydroxy-2-methyl-2-(E)-butenyl 4-diphosphate (HMBPP) into a mixture of isopentenyl diphosphate (IPP) and dimethylallyl diphosphate (DMAPP). Acts in the terminal step of the DOXP/MEP pathway for isoprenoid precursor biosynthesis. The protein is 4-hydroxy-3-methylbut-2-enyl diphosphate reductase of Shigella flexneri serotype 5b (strain 8401).